Here is a 500-residue protein sequence, read N- to C-terminus: NAD(P)H-quinone oxidoreductase chain 4, chloroplastic (500 aa).

The next 14 helical transmembrane spans lie at 4 to 24 (FPWL…MLFL), 35 to 55 (YTIC…CYNF), 87 to 107 (IGTI…AFPV), 113 to 130 (LFHF…GSFS), 134 to 154 (LLLF…LLSM), 167 to 187 (FILY…GISL), 211 to 231 (ILFY…IPLH), 242 to 262 (HYST…YGLV), 272 to 292 (AHSM…IYAA), 305 to 325 (IAYS…SITD), 330 to 350 (GAIL…FLAG), 386 to 406 (LALP…GIIT), 416 to 436 (ILII…LLSM), and 462 to 482 (LFLS…PDFV).

This sequence belongs to the complex I subunit 4 family.

The protein localises to the plastid. It is found in the chloroplast thylakoid membrane. The catalysed reaction is a plastoquinone + NADH + (n+1) H(+)(in) = a plastoquinol + NAD(+) + n H(+)(out). The enzyme catalyses a plastoquinone + NADPH + (n+1) H(+)(in) = a plastoquinol + NADP(+) + n H(+)(out). In Olimarabidopsis pumila (Dwarf rocket), this protein is NAD(P)H-quinone oxidoreductase chain 4, chloroplastic.